The chain runs to 597 residues: MSSKGSSTDGRTDLANGSLSSSPEEMSGAEEGRETSSGIEVEASDLSLSLTGDDGGPNRTSTESRGTDTESSGEDKDSDSMEDTGHYSINDENRVHDRSEEEEEEEEEEEEEQPRRRVQRKRANRDQDSSDDERALEDWVSSETSALPRPRWQALPALRERELGSSARFVYEACGARVFVQRFRLQHGLEGHTGCVNTLHFNQRGTWLASGSDDLKVVVWDWVRRQPVLDFESGHKSNVFQAKFLPNSGDSTLAMCARDGQVRVAELSATQCCKNTKRVAQHKGASHKLALEPDSPCTFLSAGEDAVVFTIDLRQDRPASKLVVTKEKEKKVGLYTIYVNPANTHQFAVGGRDQFVRIYDQRKIDENENNGVLKKFCPHHLVNSESKANITCLVYSHDGTELLASYNDEDIYLFNSSHSDGAQYVKRYKGHRNNATVKGVNFYGPKSEFVVSGSDCGHIFLWEKSSCQIIQFMEGDKGGVVNCLEPHPHLPVLATSGLDHDVKIWAPTAEASTELTGLKDVIKKNKRERDEDSLHQTDLFDSHMLWFLMHHLRQRRHHRRWREPGVGATDADSDESPSSSDTSDEEEGPDRVQCMPS.

Polar residues predominate over residues 1 to 24; the sequence is MSSKGSSTDGRTDLANGSLSSSPE. Residues 1-147 form a disordered region; that stretch reads MSSKGSSTDG…DWVSSETSAL (147 aa). 2 positions are modified to phosphoserine: Ser-21 and Ser-22. A Nuclear export signal motif is present at residues 39–50; that stretch reads IEVEASDLSLSL. The segment covering 65–99 has biased composition (basic and acidic residues); that stretch reads RGTDTESSGEDKDSDSMEDTGHYSINDENRVHDRS. Ser-99 bears the Phosphoserine mark. Residues 100–112 are compositionally biased toward acidic residues; the sequence is EEEEEEEEEEEEE. Positions 114 to 122 match the Nuclear localization signal motif; sequence PRRRVQRKR. A compositionally biased stretch (basic and acidic residues) spans 124–137; it reads NRDQDSSDDERALE. A phosphoserine mark is found at Ser-129 and Ser-130. WD repeat units follow at residues 191–230, 234–275, 281–321, 329–369, 385–424, 432–472, and 476–515; these read GHTG…PVLD, GHKS…CCKN, QHKG…PASK, EKKV…ENEN, ESKA…GAQY, RNNA…IIQF, and DKGG…STEL. Arg-204 bears the Omega-N-methylarginine; by PRMT1 mark. The tract at residues 558–597 is disordered; it reads HRRWREPGVGATDADSDESPSSSDTSDEEEGPDRVQCMPS.

This sequence belongs to the WD repeat DCAF8 family. In terms of assembly, interacts with DDB1, CUL4A and CUL4B. Interacts with KPNA1, KPNB1 and XPO1.

It localises to the nucleus. The protein localises to the cytoplasm. Its pathway is protein modification; protein ubiquitination. May function as a substrate receptor for CUL4-DDB1 E3 ubiquitin-protein ligase complex. This is DDB1- and CUL4-associated factor 8 (DCAF8) from Homo sapiens (Human).